The following is an 874-amino-acid chain: Alanine--tRNA ligase (874 aa).

Zn(2+) contacts are provided by histidine 564, histidine 568, cysteine 665, and histidine 669.

The protein belongs to the class-II aminoacyl-tRNA synthetase family. The cofactor is Zn(2+).

The protein localises to the cytoplasm. The catalysed reaction is tRNA(Ala) + L-alanine + ATP = L-alanyl-tRNA(Ala) + AMP + diphosphate. Functionally, catalyzes the attachment of alanine to tRNA(Ala) in a two-step reaction: alanine is first activated by ATP to form Ala-AMP and then transferred to the acceptor end of tRNA(Ala). Also edits incorrectly charged Ser-tRNA(Ala) and Gly-tRNA(Ala) via its editing domain. This Delftia acidovorans (strain DSM 14801 / SPH-1) protein is Alanine--tRNA ligase.